The sequence spans 196 residues: Putative HTH-type transcriptional regulator protein PtxE (196 aa).

In terms of domain architecture, HTH lysR-type spans 1–59; that stretch reads MLNPVWLKSLVAIVQTGSFQSAARALGLAQPTVSQHLQKLEEQVGVTLVQRSRSGCQPT. Positions 19–38 form a DNA-binding region, H-T-H motif; the sequence is FQSAARALGLAQPTVSQHLQ.

It belongs to the LysR transcriptional regulatory family.

This chain is Putative HTH-type transcriptional regulator protein PtxE (ptxE), found in Stutzerimonas stutzeri (Pseudomonas stutzeri).